The chain runs to 592 residues: Inactive metallocarboxypeptidase ECM14 (592 aa).

Residues methionine 1–alanine 21 form the signal peptide. A propeptide spanning residues isoleucine 22–serine 174 is cleaved from the precursor. Polar residues predominate over residues serine 170 to threonine 179. Residues serine 170 to serine 191 form a disordered region. The Peptidase M14 domain maps to aspartate 202–leucine 521. Zn(2+)-binding residues include histidine 264 and glutamate 267. Substrate-binding positions include histidine 264 to glutamate 267, arginine 322, and aspartate 339 to arginine 340. The cysteines at positions 333 and 356 are disulfide-linked. An N-linked (GlcNAc...) asparagine glycan is attached at asparagine 349. Residue histidine 396 coordinates Zn(2+). Serine 397–tyrosine 398 contacts substrate. Residues alanine 542 to arginine 592 are disordered. The span at aspartate 548 to glycine 558 shows a compositional bias: acidic residues. Over residues glutamine 559 to asparagine 575 the composition is skewed to basic and acidic residues.

Belongs to the peptidase M14 family. Requires Zn(2+) as cofactor.

It is found in the vacuole. Its subcellular location is the secreted. Its function is as follows. Inactive carboxypeptidase that may play a role in cell wall organization and biogenesis. The chain is Inactive metallocarboxypeptidase ECM14 (ECM14) from Ajellomyces dermatitidis (strain ER-3 / ATCC MYA-2586) (Blastomyces dermatitidis).